We begin with the raw amino-acid sequence, 550 residues long: Arginine--tRNA ligase (550 aa).

Positions 130–140 match the 'HIGH' region motif; it reads ANPTGPIHIGG.

Belongs to the class-I aminoacyl-tRNA synthetase family. As to quaternary structure, monomer.

The protein resides in the cytoplasm. The enzyme catalyses tRNA(Arg) + L-arginine + ATP = L-arginyl-tRNA(Arg) + AMP + diphosphate. The polypeptide is Arginine--tRNA ligase (Mycolicibacterium gilvum (strain PYR-GCK) (Mycobacterium gilvum (strain PYR-GCK))).